Here is a 209-residue protein sequence, read N- to C-terminus: MTRTLKPLILNTSALTLTLILIYTGISAHDKLTWLMEVTPVIIVVQLLLATARRYPLTPLLYTLIFLHAIILMVGGQYTYAKVPVGFEVQEWLGLSRNPYDKLGHFFQGLVPALVAREILVRGMYVRGRKMVAFLVCCVALAISAMYELIEWWAALAMGQGADDFLGTQGDQWDTQSDMFCALLGALTTVIFLARFHCRQLRRFGLITG.

At 1 to 7 (MTRTLKP) the chain is on the periplasmic side. A helical membrane pass occupies residues 8–28 (LILNTSALTLTLILIYTGISA). The Cytoplasmic segment spans residues 29–31 (HDK). The chain crosses the membrane as a helical span at residues 32-52 (LTWLMEVTPVIIVVQLLLATA). At 53-55 (RRY) the chain is on the periplasmic side. Residues 56 to 76 (PLTPLLYTLIFLHAIILMVGG) traverse the membrane as a helical segment. Topologically, residues 77–131 (QYTYAKVPVGFEVQEWLGLSRNPYDKLGHFFQGLVPALVAREILVRGMYVRGRKM) are cytoplasmic. The chain crosses the membrane as a helical span at residues 132-152 (VAFLVCCVALAISAMYELIEW). At 153-177 (WAALAMGQGADDFLGTQGDQWDTQS) the chain is on the periplasmic side. A helical membrane pass occupies residues 178–198 (DMFCALLGALTTVIFLARFHC). Residues 199 to 209 (RQLRRFGLITG) are Cytoplasmic-facing.

The protein resides in the cell inner membrane. This is Inner membrane protein YjdF (yjdF) from Escherichia coli (strain K12).